The primary structure comprises 230 residues: Lactate utilization protein C (230 aa).

Belongs to the LutC/YkgG family.

Functionally, is involved in L-lactate degradation and allows cells to grow with lactate as the sole carbon source. In Exiguobacterium sp. (strain ATCC BAA-1283 / AT1b), this protein is Lactate utilization protein C.